The following is a 100-amino-acid chain: Small ribosomal subunit protein uS14c (100 aa).

The protein belongs to the universal ribosomal protein uS14 family. In terms of assembly, part of the 30S ribosomal subunit.

It is found in the plastid. The protein localises to the chloroplast. In terms of biological role, binds 16S rRNA, required for the assembly of 30S particles. This chain is Small ribosomal subunit protein uS14c, found in Helianthus annuus (Common sunflower).